We begin with the raw amino-acid sequence, 349 residues long: Isopentenyl-diphosphate delta-isomerase (349 aa).

6 to 7 (RK) lines the substrate pocket. FMN contacts are provided by residues 62-64 (AMT), serine 93, and asparagine 122. Glutamine 152 contacts substrate. Glutamate 153 lines the Mg(2+) pocket. Residues lysine 184, threonine 214, 258 to 259 (GG), and 280 to 281 (AG) contribute to the FMN site.

The protein belongs to the IPP isomerase type 2 family. In terms of assembly, homooctamer. Dimer of tetramers. The cofactor is FMN. NADPH is required as a cofactor. Mg(2+) serves as cofactor.

Its subcellular location is the cytoplasm. It carries out the reaction isopentenyl diphosphate = dimethylallyl diphosphate. Involved in the biosynthesis of isoprenoids. Catalyzes the 1,3-allylic rearrangement of the homoallylic substrate isopentenyl (IPP) to its allylic isomer, dimethylallyl diphosphate (DMAPP). The chain is Isopentenyl-diphosphate delta-isomerase from Bacillus cereus (strain 03BB102).